Here is a 570-residue protein sequence, read N- to C-terminus: Sulfite reductase [NADPH] hemoprotein beta-component (570 aa).

Cysteine 434, cysteine 440, cysteine 479, and cysteine 483 together coordinate [4Fe-4S] cluster. Siroheme is bound at residue cysteine 483.

It belongs to the nitrite and sulfite reductase 4Fe-4S domain family. As to quaternary structure, alpha(8)-beta(8). The alpha component is a flavoprotein, the beta component is a hemoprotein. It depends on siroheme as a cofactor. Requires [4Fe-4S] cluster as cofactor.

It catalyses the reaction hydrogen sulfide + 3 NADP(+) + 3 H2O = sulfite + 3 NADPH + 4 H(+). Its pathway is sulfur metabolism; hydrogen sulfide biosynthesis; hydrogen sulfide from sulfite (NADPH route): step 1/1. Its function is as follows. Component of the sulfite reductase complex that catalyzes the 6-electron reduction of sulfite to sulfide. This is one of several activities required for the biosynthesis of L-cysteine from sulfate. In Salmonella newport (strain SL254), this protein is Sulfite reductase [NADPH] hemoprotein beta-component.